Reading from the N-terminus, the 265-residue chain is Methyl-coenzyme M reductase II subunit gamma (265 aa).

Arg123 provides a ligand contact to coenzyme M.

It belongs to the methyl-coenzyme M reductase gamma subunit family. In terms of assembly, MCR is a hexamer of two alpha, two beta, and two gamma chains, forming a dimer of heterotrimers. Coenzyme F430 serves as cofactor.

It catalyses the reaction coenzyme B + methyl-coenzyme M = methane + coenzyme M-coenzyme B heterodisulfide. It functions in the pathway one-carbon metabolism; methyl-coenzyme M reduction; methane from methyl-coenzyme M: step 1/1. In terms of biological role, component of the methyl-coenzyme M reductase (MCR) I that catalyzes the reductive cleavage of methyl-coenzyme M (CoM-S-CH3 or 2-(methylthio)ethanesulfonate) using coenzyme B (CoB or 7-mercaptoheptanoylthreonine phosphate) as reductant which results in the production of methane and the mixed heterodisulfide of CoB and CoM (CoM-S-S-CoB). This is the final step in methanogenesis. This chain is Methyl-coenzyme M reductase II subunit gamma (mrtG), found in Methanothermobacter marburgensis (strain ATCC BAA-927 / DSM 2133 / JCM 14651 / NBRC 100331 / OCM 82 / Marburg) (Methanobacterium thermoautotrophicum).